Here is a 335-residue protein sequence, read N- to C-terminus: 2-acylglycerol O-acyltransferase 2-B (335 aa).

2 helical membrane passes run 24 to 44 (WAVS…LLLF) and 104 to 124 (YIMG…NFCT). Asn-206 is a glycosylation site (N-linked (GlcNAc...) asparagine).

The protein belongs to the diacylglycerol acyltransferase family.

It localises to the endoplasmic reticulum membrane. The protein localises to the cytoplasm. Its subcellular location is the perinuclear region. The enzyme catalyses a 2-acylglycerol + an acyl-CoA = a 1,2-diacylglycerol + CoA. It catalyses the reaction a 2-acylglycerol + an acyl-CoA = a 1,2-diacyl-sn-glycerol + CoA. It carries out the reaction a 2-acylglycerol + an acyl-CoA = a 2,3-diacyl-sn-glycerol + CoA. The catalysed reaction is a 1-acylglycerol + an acyl-CoA = a 1,2-diacylglycerol + CoA. The enzyme catalyses a 1-acylglycerol + an acyl-CoA = a 1,3-diacylglycerol + CoA. It catalyses the reaction 1-O-alkylglycerol + an acyl-CoA = 1-O-alkyl-3-acylglycerol + CoA. It carries out the reaction an acyl-CoA + a 1,2-diacyl-sn-glycerol = a triacyl-sn-glycerol + CoA. Its pathway is glycerolipid metabolism; triacylglycerol biosynthesis. In terms of biological role, catalyzes the formation of diacylglycerol from 2-monoacylglycerol and fatty acyl-CoA. Its function is as follows. Involved in glycerolipid synthesis and lipid metabolism. Catalyzes the formation of diacylglycerol, the precursor of triacylglycerol, by transferring the acyl chain of a fatty acyl-CoA to a monoacylglycerol. Plays a central role in absorption of dietary fat in the small intestine by catalyzing the resynthesis of triacylglycerol in enterocytes. Has a preference toward monoacylglycerols containing unsaturated fatty acids in an order of C18:3 &gt; C18:2 &gt; C18:1 &gt; C18:0 at sn-2. Able to use 1-monoalkylglycerol (1-MAkG, 1-O-alkylglycerol) as an acyl acceptor for the synthesis of monoalkyl-monoacylglycerol (MAMAG, 1-O-alkyl-3-acylglycerol or 1-O-alkyl-2-acylglycerol) and subsequently, with lower efficiency, may add another acyl chain producing monoalkyl-diacylglycerol (MADAG, 1-O-alkyl-2,3-diacylglycerol). Possesses weak but significant activity with diacylglycerol as substrate, producing triacylglycerol (triacyl-sn-glycerol). In Xenopus laevis (African clawed frog), this protein is 2-acylglycerol O-acyltransferase 2-B (mogat2-b).